Consider the following 500-residue polypeptide: Maturase K (500 aa).

This sequence belongs to the intron maturase 2 family. MatK subfamily.

The protein resides in the plastid. It is found in the chloroplast. Functionally, usually encoded in the trnK tRNA gene intron. Probably assists in splicing its own and other chloroplast group II introns. This chain is Maturase K, found in Prunus laurocerasus (Cherry laurel).